Here is a 396-residue protein sequence, read N- to C-terminus: DNA excision repair protein ERCC-8 (396 aa).

WD repeat units lie at residues 33 to 73 (NKDR…LYDL), 88 to 129 (CSIG…VWDT), 133 to 173 (QTAD…LCDL), 177 to 216 (SCSH…LWDV), 235 to 274 (QAVE…LWNS), 281 to 321 (LVNY…VYTV), and 325 to 363 (EQIT…AWVP). Positions 371–396 (DDDETTTKSQLNPAFEDAWSSSDEEG) are disordered. Serine 390, serine 391, and serine 392 each carry phosphoserine.

As to quaternary structure, part of the CSA complex (also named DCX(ERCC8) complex), a DCX E3 ubiquitin-protein ligase complex containing ERCC8, RBX1, DDB1 and CUL4A; the CSA complex interacts with RNA polymerase II; upon UV irradiation it interacts with the COP9 signalosome and preferentially with the hyperphosphorylated form of RNA polymerase II. Interacts with ERCC6/CSB (via CIM motif); promoting recruitment to lesion-stalled RNA polymerase II (Pol II). Interacts with KIAA1530/UVSSA. Interacts with a subunit of RNA polymerase II TFIIH.

It localises to the nucleus. It is found in the chromosome. The protein resides in the nucleus matrix. Its pathway is protein modification; protein ubiquitination. Its function is as follows. Substrate-recognition component of the CSA complex, a DCX (DDB1-CUL4-X-box) E3 ubiquitin-protein ligase complex, involved in transcription-coupled nucleotide excision repair (TC-NER), a process during which RNA polymerase II-blocking lesions are rapidly removed from the transcribed strand of active genes. Following recruitment to lesion-stalled RNA polymerase II (Pol II), the CSA complex mediates ubiquitination of Pol II subunit POLR2A/RPB1 at 'Lys-1268', a critical TC-NER checkpoint, governing RNA Pol II stability and initiating DNA damage excision by TFIIH recruitment. The CSA complex also promotes the ubiquitination and subsequent proteasomal degradation of ERCC6/CSB in a UV-dependent manner; ERCC6 degradation is essential for the recovery of RNA synthesis after transcription-coupled repair. Also plays a role in DNA double-strand breaks (DSSBs) repair by non-homologous end joining (NHEJ). This is DNA excision repair protein ERCC-8 from Homo sapiens (Human).